We begin with the raw amino-acid sequence, 256 residues long: Acetyl-coenzyme A carboxylase carboxyl transferase subunit alpha (256 aa).

Residues 1–236 (MTKITRIIKE…KEEIAAELDS (236 aa)) form the CoA carboxyltransferase C-terminal domain.

It belongs to the AccA family. Acetyl-CoA carboxylase is a heterohexamer composed of biotin carboxyl carrier protein (AccB), biotin carboxylase (AccC) and two subunits each of ACCase subunit alpha (AccA) and ACCase subunit beta (AccD).

Its subcellular location is the cytoplasm. The catalysed reaction is N(6)-carboxybiotinyl-L-lysyl-[protein] + acetyl-CoA = N(6)-biotinyl-L-lysyl-[protein] + malonyl-CoA. It participates in lipid metabolism; malonyl-CoA biosynthesis; malonyl-CoA from acetyl-CoA: step 1/1. Functionally, component of the acetyl coenzyme A carboxylase (ACC) complex. First, biotin carboxylase catalyzes the carboxylation of biotin on its carrier protein (BCCP) and then the CO(2) group is transferred by the carboxyltransferase to acetyl-CoA to form malonyl-CoA. The protein is Acetyl-coenzyme A carboxylase carboxyl transferase subunit alpha of Streptococcus sanguinis (strain SK36).